Consider the following 376-residue polypeptide: Cytoplasmic tRNA 2-thiolation protein 2 (376 aa).

It belongs to the CTU2/NCS2 family.

It is found in the cytoplasm. It functions in the pathway tRNA modification; 5-methoxycarbonylmethyl-2-thiouridine-tRNA biosynthesis. In terms of biological role, plays a central role in 2-thiolation of mcm(5)S(2)U at tRNA wobble positions of tRNA(Lys), tRNA(Glu) and tRNA(Gln). May act by forming a heterodimer with NCS6 that ligates sulfur from thiocarboxylated URM1 onto the uridine of tRNAs at wobble position. Prior mcm(5) tRNA modification by the elongator complex is required for 2-thiolation. May also be involved in protein urmylation. In Coccidioides immitis (strain RS) (Valley fever fungus), this protein is Cytoplasmic tRNA 2-thiolation protein 2.